A 267-amino-acid polypeptide reads, in one-letter code: MIDKSAVIHPSSIIEEGAVIGANVRIGPFCVIGSHVEIGEGTDIKSHVVINGHTRIGRDNQIYQFASIGEVNQDLKYRGEPTQVIIGDRNLIRESVTIHRGTTQGGNITKIGNDNLLMINTHVAHDCIIGDRCIIANNGTLGGHVTLGDYVIIGGMSAVHQFCQIGSHVMVGGCSGVAQDVPPFVIAQGNHATPYGLNIEGLKRRGFAKEDLHAIRNAYKILYRNGKTLEEAREEIAQLAADNNNQYVKIFSDFLENSAKSNRGIIR.

This sequence belongs to the transferase hexapeptide repeat family. LpxA subfamily. Homotrimer.

The protein resides in the cytoplasm. The enzyme catalyses a (3R)-hydroxyacyl-[ACP] + UDP-N-acetyl-alpha-D-glucosamine = a UDP-3-O-[(3R)-3-hydroxyacyl]-N-acetyl-alpha-D-glucosamine + holo-[ACP]. It functions in the pathway glycolipid biosynthesis; lipid IV(A) biosynthesis; lipid IV(A) from (3R)-3-hydroxytetradecanoyl-[acyl-carrier-protein] and UDP-N-acetyl-alpha-D-glucosamine: step 1/6. Its function is as follows. Involved in the biosynthesis of lipid A, a phosphorylated glycolipid that anchors the lipopolysaccharide to the outer membrane of the cell. This chain is Acyl-[acyl-carrier-protein]--UDP-N-acetylglucosamine O-acyltransferase, found in Proteus mirabilis (strain HI4320).